A 250-amino-acid chain; its full sequence is tRNA pseudouridine synthase A (250 aa).

Asp-52 serves as the catalytic Nucleophile. Tyr-111 contacts substrate.

This sequence belongs to the tRNA pseudouridine synthase TruA family. As to quaternary structure, homodimer.

It catalyses the reaction uridine(38/39/40) in tRNA = pseudouridine(38/39/40) in tRNA. Formation of pseudouridine at positions 38, 39 and 40 in the anticodon stem and loop of transfer RNAs. This is tRNA pseudouridine synthase A from Methylobacterium sp. (strain 4-46).